The primary structure comprises 606 residues: RUN and FYVE domain-containing protein 2 (606 aa).

Residues D37–E169 form the RUN domain. Positions E210–G534 form a coiled coil. The FYVE-type zinc-finger motif lies at D540–I598. Zn(2+) contacts are provided by C546, C549, C562, C565, C570, C573, C590, and C593.

Interacts with BMX. In terms of tissue distribution, expressed in brain, lung and testis.

The protein localises to the nucleus. The sequence is that of RUN and FYVE domain-containing protein 2 (RUFY2) from Homo sapiens (Human).